The primary structure comprises 166 residues: Orotate phosphoribosyltransferase (166 aa).

5-phospho-alpha-D-ribose 1-diphosphate is bound by residues R83, K84, H89, and 109-117 (DDVATTGGS). Orotate contacts are provided by T113 and R141.

This sequence belongs to the purine/pyrimidine phosphoribosyltransferase family. PyrE subfamily. In terms of assembly, homodimer. The cofactor is Mg(2+).

The enzyme catalyses orotidine 5'-phosphate + diphosphate = orotate + 5-phospho-alpha-D-ribose 1-diphosphate. The protein operates within pyrimidine metabolism; UMP biosynthesis via de novo pathway; UMP from orotate: step 1/2. Its function is as follows. Catalyzes the transfer of a ribosyl phosphate group from 5-phosphoribose 1-diphosphate to orotate, leading to the formation of orotidine monophosphate (OMP). The protein is Orotate phosphoribosyltransferase of Picrophilus torridus (strain ATCC 700027 / DSM 9790 / JCM 10055 / NBRC 100828 / KAW 2/3).